The primary structure comprises 405 residues: Tryptophan synthase beta chain (405 aa).

Lys95 is modified (N6-(pyridoxal phosphate)lysine).

It belongs to the TrpB family. Tetramer of two alpha and two beta chains. Requires pyridoxal 5'-phosphate as cofactor.

The enzyme catalyses (1S,2R)-1-C-(indol-3-yl)glycerol 3-phosphate + L-serine = D-glyceraldehyde 3-phosphate + L-tryptophan + H2O. The protein operates within amino-acid biosynthesis; L-tryptophan biosynthesis; L-tryptophan from chorismate: step 5/5. In terms of biological role, the beta subunit is responsible for the synthesis of L-tryptophan from indole and L-serine. This is Tryptophan synthase beta chain from Pseudomonas putida (strain W619).